We begin with the raw amino-acid sequence, 286 residues long: MKNILSIQSHVVYGYAGNKSATFPMQLLGVDVWALNTVQFSNHTQYGKWKGIVMPKEQIGEIIQGIDEIGELAKCDAVLSGYIGSAEQVTEIVNAFHTVKSRNPNAIYLCDPVMGHPDKGRIVADGVKEGLIKQAMAHADIITPNLVELRELSGLRVENFEQAIEAVKVILTKGPKKVLVKHLSKVGKQADKFEMFFATEEGIWHISRPLYQFDKEPVGVGDLTAGLFLANLLNGKSDIEAFEHTANAVNDVMEVTANSGVYELQIIAAREFILTPRSQYKAIKIV.

Residues S9 and 44-45 (TQ) each bind substrate. D111, E148, and K181 together coordinate ATP. D222 lines the substrate pocket.

It belongs to the pyridoxine kinase family. PdxY subfamily. As to quaternary structure, homodimer. It depends on Mg(2+) as a cofactor.

The enzyme catalyses pyridoxal + ATP = pyridoxal 5'-phosphate + ADP + H(+). It participates in cofactor metabolism; pyridoxal 5'-phosphate salvage; pyridoxal 5'-phosphate from pyridoxal: step 1/1. In terms of biological role, pyridoxal kinase involved in the salvage pathway of pyridoxal 5'-phosphate (PLP). Catalyzes the phosphorylation of pyridoxal to PLP. This chain is Pyridoxal kinase PdxY, found in Actinobacillus pleuropneumoniae serotype 5b (strain L20).